The primary structure comprises 245 residues: Uridylate kinase (245 aa).

An ATP-binding site is contributed by lysine 18–glycine 21. Glycine 60 serves as a coordination point for UMP. Residues glycine 61 and arginine 65 each contribute to the ATP site. Residues aspartate 80 and threonine 141–threonine 148 each bind UMP. The ATP site is built by threonine 168, tyrosine 174, and aspartate 177.

Belongs to the UMP kinase family. In terms of assembly, homohexamer.

Its subcellular location is the cytoplasm. It carries out the reaction UMP + ATP = UDP + ADP. It participates in pyrimidine metabolism; CTP biosynthesis via de novo pathway; UDP from UMP (UMPK route): step 1/1. Inhibited by UTP. Functionally, catalyzes the reversible phosphorylation of UMP to UDP. The sequence is that of Uridylate kinase from Pseudomonas paraeruginosa (strain DSM 24068 / PA7) (Pseudomonas aeruginosa (strain PA7)).